We begin with the raw amino-acid sequence, 114 residues long: MSNIITEITKSQLRTDLPAFRPGDTVKVHVKVVEGTRERIQLFEGVVIKRRGGGISETFTVRKISYGVGVERTFPVHTPKIANLEVVRRGKVRRAKLYYLRNLRGKAARIKEIR.

It belongs to the bacterial ribosomal protein bL19 family.

Functionally, this protein is located at the 30S-50S ribosomal subunit interface and may play a role in the structure and function of the aminoacyl-tRNA binding site. This Lysinibacillus sphaericus (strain C3-41) protein is Large ribosomal subunit protein bL19.